Reading from the N-terminus, the 122-residue chain is Large ribosomal subunit protein uL14 (122 aa).

The protein belongs to the universal ribosomal protein uL14 family. In terms of assembly, part of the 50S ribosomal subunit. Forms a cluster with proteins L3 and L19. In the 70S ribosome, L14 and L19 interact and together make contacts with the 16S rRNA in bridges B5 and B8.

Functionally, binds to 23S rRNA. Forms part of two intersubunit bridges in the 70S ribosome. This Paramagnetospirillum magneticum (strain ATCC 700264 / AMB-1) (Magnetospirillum magneticum) protein is Large ribosomal subunit protein uL14.